The sequence spans 301 residues: Sulfate adenylyltransferase subunit 2 (301 aa).

It belongs to the PAPS reductase family. CysD subfamily. As to quaternary structure, heterodimer composed of CysD, the smaller subunit, and CysN.

The enzyme catalyses sulfate + ATP + H(+) = adenosine 5'-phosphosulfate + diphosphate. The protein operates within sulfur metabolism; hydrogen sulfide biosynthesis; sulfite from sulfate: step 1/3. With CysN forms the ATP sulfurylase (ATPS) that catalyzes the adenylation of sulfate producing adenosine 5'-phosphosulfate (APS) and diphosphate, the first enzymatic step in sulfur assimilation pathway. APS synthesis involves the formation of a high-energy phosphoric-sulfuric acid anhydride bond driven by GTP hydrolysis by CysN coupled to ATP hydrolysis by CysD. The protein is Sulfate adenylyltransferase subunit 2 of Geotalea daltonii (strain DSM 22248 / JCM 15807 / FRC-32) (Geobacter daltonii).